A 184-amino-acid chain; its full sequence is NADH-quinone oxidoreductase subunit B (184 aa).

Positions 37, 38, 103, and 132 each coordinate [4Fe-4S] cluster.

It belongs to the complex I 20 kDa subunit family. NDH-1 is composed of 14 different subunits. Subunits NuoB, C, D, E, F, and G constitute the peripheral sector of the complex. The cofactor is [4Fe-4S] cluster.

The protein localises to the cell membrane. The catalysed reaction is a quinone + NADH + 5 H(+)(in) = a quinol + NAD(+) + 4 H(+)(out). Its function is as follows. NDH-1 shuttles electrons from NADH, via FMN and iron-sulfur (Fe-S) centers, to quinones in the respiratory chain. The immediate electron acceptor for the enzyme in this species is believed to be a menaquinone. Couples the redox reaction to proton translocation (for every two electrons transferred, four hydrogen ions are translocated across the cytoplasmic membrane), and thus conserves the redox energy in a proton gradient. The chain is NADH-quinone oxidoreductase subunit B from Mycolicibacterium smegmatis (strain ATCC 700084 / mc(2)155) (Mycobacterium smegmatis).